The sequence spans 114 residues: Replication initiation control protein YabA (114 aa).

Zn(2+) is bound by residues H79, C81, C95, and C98.

It belongs to the YabA family. As to quaternary structure, homotetramer. Interacts with both DnaA and DnaN, acting as a bridge between these two proteins. The cofactor is Zn(2+).

The protein localises to the cytoplasm. Its subcellular location is the nucleoid. In terms of biological role, involved in control of chromosome replication initiation. Inhibits the cooperative binding of DnaA to the oriC region, thus negatively regulating initiation of chromosome replication. Inhibits the ability of DnaA-ATP to form a helix on DNA; does not disassemble preformed DnaA-DNA helices. Decreases the residence time of DnaA on the chromosome at its binding sites (oriC, replication forks and promoter-binding sites). Tethers DnaA to the replication machinery via the DNA polymerase beta sliding clamp subunit (dnaN). Associates with oriC and other DnaA targets on the chromosome in a DnaA-dependent manner. This Lactobacillus gasseri (strain ATCC 33323 / DSM 20243 / BCRC 14619 / CIP 102991 / JCM 1131 / KCTC 3163 / NCIMB 11718 / NCTC 13722 / AM63) protein is Replication initiation control protein YabA.